A 450-amino-acid polypeptide reads, in one-letter code: MSVHSPNPGLILQSKRFNGLRNILEREGPFCKDGFAASSENLEFLQTKCQVLIIGAGGLGCELLKDLALMGFGNLHVIDMDTIELSNLNRQFLFRRTDIGASKAECAARFINARVPTCRVTPHFKKIQDFDESFYQQFHLVVCGLDSIVARRWINGMLLSMLRYEEDGTIDTSSIVPMIDGGTEGFKGNARVILPGFTACIECTLDLFPPQVNYPLCTIANTPRLPEHCIEYVKIIQWEKQNPFGVPLDGDDPQHIGWIYERALERSNEFNITGVTYRLVQGVVKHIIPAVASTNAAIAAACALEVFKLATSCYDSMANYLNFNDLDGIYTYTYEAEKSENCLACSNTPQPLPIEDPNTTTLEDVIKLLCDSPRFQLKSPALTTVMKDGKRRTLYMSGVKSIEEATRKNLTQSLGELGLHDGQQLTVTDATSPSAMTLQLKYQSNEVEMV.

An ATP-binding site is contributed by 58-82 (GLGCELLKDLALMGFGNLHVIDMDT). The Glycyl thioester intermediate role is filled by Cys217.

Belongs to the ubiquitin-activating E1 family. UBA3 subfamily. Heterodimer of Uba3 and APP-BP1. Interacts with Nedd8 and UbcE2M. As to expression, expressed in the wing disk.

It carries out the reaction ATP + [NEDD8 protein] + [E1 NEDD8-activating enzyme]-L-cysteine = AMP + diphosphate + [E1 NEDD8-activating enzyme]-S-[NEDD8 protein]-yl-L-cysteine.. The protein operates within protein modification; protein neddylation. Its function is as follows. Catalytic subunit of the dimeric Uba3-APP-BP1 E1 enzyme. E1 activates Nedd8 by first adenylating its C-terminal glycine residue with ATP, thereafter linking this residue to the side chain of the catalytic cysteine, yielding a Nedd8-Uba3 thioester and free AMP. E1 finally transfers Nedd8 to the catalytic cysteine of UbcE2M. Required for Cul1 and Cul3 neddylation. Negatively regulates full-length ci stability and hedgehog signaling. The polypeptide is Nedd8-activating enzyme E1 catalytic subunit (Uba3) (Drosophila melanogaster (Fruit fly)).